A 228-amino-acid chain; its full sequence is Aquaporin Z (228 aa).

Transmembrane regions (helical) follow at residues 1-21 (MLNK…GGCG) and 23-43 (AILA…ALAF). The NPA 1 motif lies at 63-65 (NPA). 3 helical membrane-spanning segments follow: residues 82 to 102 (IPYW…LYVI), 129 to 149 (MMAG…IILG), and 154 to 174 (LAPA…IHLV). The short motif at 184-186 (NPA) is the NPA 2 element. Residues 205–225 (LFWVAPLVGAVIGAIIWKGLL) traverse the membrane as a helical segment.

This sequence belongs to the MIP/aquaporin (TC 1.A.8) family. As to quaternary structure, homotetramer.

Its subcellular location is the cell inner membrane. It catalyses the reaction H2O(in) = H2O(out). Its function is as follows. Channel that permits osmotically driven movement of water in both directions. It is involved in the osmoregulation and in the maintenance of cell turgor during volume expansion in rapidly growing cells. It mediates rapid entry or exit of water in response to abrupt changes in osmolarity. The chain is Aquaporin Z from Brucella abortus biovar 1 (strain 9-941).